A 1578-amino-acid chain; its full sequence is Pentafunctional AROM polypeptide (1578 aa).

Residues methionine 1–asparagine 384 form a 3-dehydroquinate synthase region. Residues aspartate 44–asparagine 46, glutamate 81–lysine 84, glycine 114–valine 116, and aspartate 119 each bind NAD(+). Arginine 130 contacts 7-phospho-2-dehydro-3-deoxy-D-arabino-heptonate. Position 139–140 (threonine 139–threonine 140) interacts with NAD(+). 7-phospho-2-dehydro-3-deoxy-D-arabino-heptonate is bound by residues aspartate 146 and lysine 152. Residue lysine 161 participates in NAD(+) binding. Residue asparagine 162 participates in 7-phospho-2-dehydro-3-deoxy-D-arabino-heptonate binding. NAD(+)-binding positions include phenylalanine 179–threonine 182 and asparagine 190. Glutamate 194 lines the Zn(2+) pocket. Residues glutamate 194–lysine 197 and lysine 250 contribute to the 7-phospho-2-dehydro-3-deoxy-D-arabino-heptonate site. Glutamate 260 (proton acceptor; for 3-dehydroquinate synthase activity) is an active-site residue. Residues arginine 264–asparagine 268 and histidine 271 contribute to the 7-phospho-2-dehydro-3-deoxy-D-arabino-heptonate site. Histidine 271 contacts Zn(2+). Histidine 275 functions as the Proton acceptor; for 3-dehydroquinate synthase activity in the catalytic mechanism. 7-phospho-2-dehydro-3-deoxy-D-arabino-heptonate-binding residues include histidine 287 and lysine 356. Residue histidine 287 participates in Zn(2+) binding. The EPSP synthase stretch occupies residues valine 397–valine 842. The For EPSP synthase activity role is filled by cysteine 824. A shikimate kinase region spans residues serine 864 to serine 1055. Glycine 871 to threonine 878 lines the ATP pocket. The segment at leucine 1056 to aspartate 1276 is 3-dehydroquinase. Catalysis depends on histidine 1179, which acts as the Proton acceptor; for 3-dehydroquinate dehydratase activity. Catalysis depends on lysine 1207, which acts as the Schiff-base intermediate with substrate; for 3-dehydroquinate dehydratase activity. The shikimate dehydrogenase stretch occupies residues lysine 1289–glycine 1578.

It in the N-terminal section; belongs to the sugar phosphate cyclases superfamily. Dehydroquinate synthase family. The protein in the 2nd section; belongs to the EPSP synthase family. In the 3rd section; belongs to the shikimate kinase family. This sequence in the 4th section; belongs to the type-I 3-dehydroquinase family. It in the C-terminal section; belongs to the shikimate dehydrogenase family. In terms of assembly, homodimer. The cofactor is Zn(2+).

The protein localises to the cytoplasm. The catalysed reaction is 7-phospho-2-dehydro-3-deoxy-D-arabino-heptonate = 3-dehydroquinate + phosphate. The enzyme catalyses 3-dehydroquinate = 3-dehydroshikimate + H2O. It carries out the reaction shikimate + NADP(+) = 3-dehydroshikimate + NADPH + H(+). It catalyses the reaction shikimate + ATP = 3-phosphoshikimate + ADP + H(+). The catalysed reaction is 3-phosphoshikimate + phosphoenolpyruvate = 5-O-(1-carboxyvinyl)-3-phosphoshikimate + phosphate. It participates in metabolic intermediate biosynthesis; chorismate biosynthesis; chorismate from D-erythrose 4-phosphate and phosphoenolpyruvate: step 2/7. Its pathway is metabolic intermediate biosynthesis; chorismate biosynthesis; chorismate from D-erythrose 4-phosphate and phosphoenolpyruvate: step 3/7. It functions in the pathway metabolic intermediate biosynthesis; chorismate biosynthesis; chorismate from D-erythrose 4-phosphate and phosphoenolpyruvate: step 4/7. The protein operates within metabolic intermediate biosynthesis; chorismate biosynthesis; chorismate from D-erythrose 4-phosphate and phosphoenolpyruvate: step 5/7. It participates in metabolic intermediate biosynthesis; chorismate biosynthesis; chorismate from D-erythrose 4-phosphate and phosphoenolpyruvate: step 6/7. The AROM polypeptide catalyzes 5 consecutive enzymatic reactions in prechorismate polyaromatic amino acid biosynthesis. The polypeptide is Pentafunctional AROM polypeptide (Neosartorya fischeri (strain ATCC 1020 / DSM 3700 / CBS 544.65 / FGSC A1164 / JCM 1740 / NRRL 181 / WB 181) (Aspergillus fischerianus)).